Here is a 459-residue protein sequence, read N- to C-terminus: NADP-specific glutamate dehydrogenase (459 aa).

Residue Lys114 is part of the active site.

The protein belongs to the Glu/Leu/Phe/Val dehydrogenases family. In terms of assembly, homohexamer.

The catalysed reaction is L-glutamate + NADP(+) + H2O = 2-oxoglutarate + NH4(+) + NADPH + H(+). The protein is NADP-specific glutamate dehydrogenase (gdhA) of Emericella nidulans (strain FGSC A4 / ATCC 38163 / CBS 112.46 / NRRL 194 / M139) (Aspergillus nidulans).